Reading from the N-terminus, the 364-residue chain is mRNA decay activator protein ZFP36L2-B (364 aa).

Residues 102–111 (SFSENGERSQ) show a composition bias toward basic and acidic residues. Positions 102 to 129 (SFSENGERSQHLLHLQQQQQQQKAGAQV) are disordered. The span at 113 to 123 (LLHLQQQQQQQ) shows a compositional bias: low complexity. The RNA-binding signature appears at 133–138 (RYKTEL). 2 C3H1-type zinc fingers span residues 133-161 (RYKTELCRPFEENGACKYGEKCQFAHGFH) and 171-199 (KYKTELCRTFHTIGFCPYGPRCHFIHNAE). The segment at 150–191 (YGEKCQFAHGFHELRSLTRHPKYKTELCRTFHTIGFCPYGPR) is RNA-binding. The tract at residues 308 to 350 (SESPVFDAPPSPPDSLSDRDSYLSGSLSSGSLSGSDSPTLDSN) is disordered. Positions 329–348 (YLSGSLSSGSLSGSDSPTLD) are enriched in low complexity.

In terms of processing, phosphorylated. As to expression, remains unlocalized in the egg and early embryo. From stage 21 (late neurula), expressed around the pronephros in the anterior crests, pharyngeal arch, hindbrain, mesodermal tissues around the pronephros and tail-bud. This expression pattern is maintained up to the tadpole stage.

It is found in the nucleus. Its subcellular location is the cytoplasm. Zinc-finger RNA-binding protein that destabilizes several cytoplasmic AU-rich element (ARE)-containing mRNA transcripts by promoting their poly(A) tail removal or deadenylation, and hence provide a mechanism for attenuating protein synthesis. Acts as a 3'-untranslated region (UTR) ARE mRNA-binding adapter protein to communicate signaling events to the mRNA decay machinery. Functions by recruiting the CCR4-NOT deadenylase complex and probably other components of the cytoplasmic RNA decay machinery to the bound ARE-containing mRNAs, and hence promotes ARE-mediated mRNA deadenylation and decay processes. Binds to 3'-UTR ARE of numerous mRNAs. Also induces the degradation of ARE-containing mRNAs even in absence of poly(A) tail. Required for tubulogenesis during pronephros development. This is mRNA decay activator protein ZFP36L2-B (zfp36l2-B) from Xenopus laevis (African clawed frog).